Consider the following 309-residue polypeptide: Dicarboxylate carrier UCP2 (309 aa).

Residues 1 to 16 (MVGFKATDVPPTATVK) lie on the Mitochondrial intermembrane side of the membrane. Solcar repeat units lie at residues 11 to 106 (PTAT…VKQF), 114 to 203 (AGIG…IKDA), and 212 to 297 (DDLP…LKRA). Positions 16 to 63 (KFLGAGTAACIADLITFPLDTAKVRLQIQGERQGPVRAAASAQYRGVL) are important for interaction with long-chain fatty acids. The chain crosses the membrane as a helical span at residues 17–40 (FLGAGTAACIADLITFPLDTAKVR). Topologically, residues 41 to 77 (LQIQGERQGPVRAAASAQYRGVLCTILTMVRTEGPRS) are mitochondrial matrix. The helical transmembrane segment at 78–103 (LYSGLVAGLQRQMSFASVRIGLYDSV) threads the bilayer. The Mitochondrial intermembrane segment spans residues 104–119 (KQFYTKGSEHAGIGSR). A helical transmembrane segment spans residues 120-145 (LLAGSTTGALAVAVAQPTDVVKVRFQ). The Mitochondrial matrix portion of the chain corresponds to 146 to 173 (AQARAGSGRRYQSTVDAYKTIAREEGFR). Residues 174 to 199 (GLWKGTSPNVARNAIVNCAELVTYDL) traverse the membrane as a helical segment. Residues 200–217 (IKDALLKANLMTDDLPCH) are Mitochondrial intermembrane-facing. A helical membrane pass occupies residues 218–242 (FTSAFGAGFCTTVIASPVDVVKTRY). At 243 to 268 (MNSALGQYSSAGHCALTMLQKEGPRA) the chain is on the mitochondrial matrix side. The helical transmembrane segment at 269-294 (FYKGFMPSFLRLGSWNVVMFVTYEQL) threads the bilayer. The segment at 278-285 (LRLGSWNV) is important for interaction with long-chain fatty acids. Residues 295–309 (KRALMAACTSREAPF) lie on the Mitochondrial intermembrane side of the membrane.

This sequence belongs to the mitochondrial carrier (TC 2.A.29) family. As to quaternary structure, homotetramer. Adopts an asymmetrical dimer of dimers functional form. Interacts with MICU1 (when methylated); leading to decrease the calcium sensitivity of MICU1.

It is found in the mitochondrion inner membrane. The enzyme catalyses L-aspartate(out) + phosphate(in) + H(+)(in) = L-aspartate(in) + phosphate(out) + H(+)(out). The catalysed reaction is oxaloacetate(out) + phosphate(in) + H(+)(in) = oxaloacetate(in) + phosphate(out) + H(+)(out). It carries out the reaction (S)-malate(out) + phosphate(in) + H(+)(in) = (S)-malate(in) + phosphate(out) + H(+)(out). It catalyses the reaction malonate(out) + phosphate(in) + H(+)(in) = malonate(in) + phosphate(out) + H(+)(out). The enzyme catalyses sulfate(out) + phosphate(in) + H(+)(in) = sulfate(in) + phosphate(out) + H(+)(out). The catalysed reaction is (S)-malate(out) = (S)-malate(in). It carries out the reaction L-aspartate(out) = L-aspartate(in). It catalyses the reaction phosphate(in) = phosphate(out). The enzyme catalyses chloride(in) = chloride(out). The catalysed reaction is H(+)(in) = H(+)(out). It carries out the reaction a long-chain fatty acid(out) = a long-chain fatty acid(in). Antiporter that exports dicarboxylate intermediates of the Krebs cycle in exchange for phosphate plus a proton across the inner membrane of mitochondria, a process driven by mitochondrial motive force with an overall impact on glycolysis, glutaminolysis and glutathione-dependent redox balance. Continuous export of oxaloacetate and related four-carbon dicarboxylates from mitochondrial matrix into the cytosol negatively regulates the oxidation of acetyl-CoA substrates via the Krebs cycle lowering the ATP/ADP ratio and reactive oxygen species (ROS) production. May mediate inducible proton entry into the mitochondrial matrix affecting ATP turnover as a protection mechanism against oxidative stress. The proton currents are most likely associated with fatty acid flipping across the inner membrane of mitochondria in a metabolic process regulated by free fatty acids and purine nucleotides. Regulates the use of glucose as a source of energy. Required for glucose-induced DRP1-dependent mitochondrial fission and neuron activation in the ventromedial nucleus of the hypothalamus (VMH). This mitochondrial adaptation mechanism modulates the VMH pool of glucose-excited neurons with an impact on systemic glucose homeostasis. Regulates ROS levels and metabolic reprogramming of macrophages during the resolution phase of inflammation. Attenuates ROS production in response to IL33 to preserve the integrity of the Krebs cycle required for persistent production of itaconate and subsequent GATA3-dependent differentiation of inflammation-resolving alternatively activated macrophages. Can unidirectionally transport anions including L-malate, L-aspartate, phosphate and chloride ions. Does not mediate adaptive thermogenesis. The protein is Dicarboxylate carrier UCP2 (UCP2) of Canis lupus familiaris (Dog).